A 255-amino-acid chain; its full sequence is 5-oxoprolinase subunit A (255 aa).

The protein belongs to the LamB/PxpA family. As to quaternary structure, forms a complex composed of PxpA, PxpB and PxpC.

The enzyme catalyses 5-oxo-L-proline + ATP + 2 H2O = L-glutamate + ADP + phosphate + H(+). Functionally, catalyzes the cleavage of 5-oxoproline to form L-glutamate coupled to the hydrolysis of ATP to ADP and inorganic phosphate. This chain is 5-oxoprolinase subunit A, found in Pyrococcus abyssi (strain GE5 / Orsay).